Consider the following 1954-residue polypeptide: Integrin beta-like protein C (1954 aa).

The signal sequence occupies residues 1–20 (MNKLFYLFILIASLFILTDA). At 21-1883 (SHFRFGTISW…TTTQTNDNKT (1863 aa)) the chain is on the extracellular side. Asparagine 138 and asparagine 354 each carry an N-linked (GlcNAc...) asparagine glycan. The region spanning 428-465 (YGENCVAVPPCVNGVPNSGINGDGKCLCSNGWTGADCS) is the EGF-like domain. Disulfide bonds link cysteine 438–cysteine 453 and cysteine 455–cysteine 464. Asparagine 479 carries an N-linked (GlcNAc...) asparagine glycan. The VWFA domain occupies 521–706 (DVYVLVDANL…TGVKNVLSKI (186 aa)). Residues asparagine 1348, asparagine 1382, asparagine 1628, asparagine 1678, asparagine 1742, asparagine 1770, asparagine 1820, asparagine 1860, and asparagine 1881 are each glycosylated (N-linked (GlcNAc...) asparagine). The helical transmembrane segment at 1884–1904 (VLTGAIAGAAAGTALIAAAAW) threads the bilayer. At 1905–1954 (RLLRKAAPPTDTFFSEAAFLGDGVSSNPLYEQSASAAENPLYQSASDTTD) the chain is on the cytoplasmic side.

It belongs to the SIB family. As to quaternary structure, interacts with talA/talin.

The protein resides in the membrane. Its function is as follows. Implicated in cellular adhesion. This Dictyostelium discoideum (Social amoeba) protein is Integrin beta-like protein C (sibC).